Reading from the N-terminus, the 606-residue chain is MIISPFKKQTARRYTHSVKIGSLFVGSEHSIKMQSMTTTPTSDVDATVAQICSLVEAKCDIARVTVQGVKEAQACEHIKERLLTMGLDIPLVADIHFFPQAAMHVADFVDKVRINPGNFVDKRNMFSGKTYTDKNYADSLLRLEEKFSPLVEKCKRLGKAMRIGVNHGSLSERIMQRYGDTIEGMVVSALEYIKVCENLGYRDVVFSMKSSNPKVMVAAYRQLAKDLDARGWHYPLHLGVTEAGMGMDGIIKSAVGIGTLLTEGLGDTIRCSLTGCPTEEIPVCESLLKHTTIYLNLPKQENPFALENSESFVNASKKITKTTPWGSVYGVFIKLHEHHILNTTAERLLEQLGINPTNGKKDATAPEGVVIPKSFLGTSIIEKLQKHMSVFHHHEVPCLYDYNEEIWNNEQVLSAPFVHCHATPPFIHSVRSFFSKRQCEDQPVKLVFSKDLDDEYEATVSIATEFGALLLDGLGEGVILDLPNIPLPTVREIAFGTLQSAGVRLVKTEYISCPGCGRTLFDLPEVTTRIRNKTKHLVGLKIAVMGCIVNGPGEMADADFGFVGSKTGMIDLYVKHTCVKAHIPMEDAEEELFRLLQEHGVWKDPE.

[4Fe-4S] cluster is bound by residues Cys-513, Cys-516, Cys-547, and Glu-554.

It belongs to the IspG family. Requires [4Fe-4S] cluster as cofactor.

The catalysed reaction is (2E)-4-hydroxy-3-methylbut-2-enyl diphosphate + oxidized [flavodoxin] + H2O + 2 H(+) = 2-C-methyl-D-erythritol 2,4-cyclic diphosphate + reduced [flavodoxin]. The protein operates within isoprenoid biosynthesis; isopentenyl diphosphate biosynthesis via DXP pathway; isopentenyl diphosphate from 1-deoxy-D-xylulose 5-phosphate: step 5/6. In terms of biological role, converts 2C-methyl-D-erythritol 2,4-cyclodiphosphate (ME-2,4cPP) into 1-hydroxy-2-methyl-2-(E)-butenyl 4-diphosphate. In Chlamydia felis (strain Fe/C-56) (Chlamydophila felis), this protein is 4-hydroxy-3-methylbut-2-en-1-yl diphosphate synthase (flavodoxin).